The primary structure comprises 361 residues: Chorismate synthase (361 aa).

2 residues coordinate NADP(+): arginine 48 and arginine 54. FMN is bound by residues 125–127 (RSS), 238–239 (NA), glycine 278, 293–297 (KPTSS), and arginine 319.

Belongs to the chorismate synthase family. As to quaternary structure, homotetramer. Requires FMNH2 as cofactor.

The catalysed reaction is 5-O-(1-carboxyvinyl)-3-phosphoshikimate = chorismate + phosphate. It functions in the pathway metabolic intermediate biosynthesis; chorismate biosynthesis; chorismate from D-erythrose 4-phosphate and phosphoenolpyruvate: step 7/7. In terms of biological role, catalyzes the anti-1,4-elimination of the C-3 phosphate and the C-6 proR hydrogen from 5-enolpyruvylshikimate-3-phosphate (EPSP) to yield chorismate, which is the branch point compound that serves as the starting substrate for the three terminal pathways of aromatic amino acid biosynthesis. This reaction introduces a second double bond into the aromatic ring system. This Photorhabdus laumondii subsp. laumondii (strain DSM 15139 / CIP 105565 / TT01) (Photorhabdus luminescens subsp. laumondii) protein is Chorismate synthase.